Reading from the N-terminus, the 463-residue chain is ATP synthase subunit beta (463 aa).

151 to 158 contributes to the ATP binding site; the sequence is GGAGVGKT.

Belongs to the ATPase alpha/beta chains family. In terms of assembly, F-type ATPases have 2 components, CF(1) - the catalytic core - and CF(0) - the membrane proton channel. CF(1) has five subunits: alpha(3), beta(3), gamma(1), delta(1), epsilon(1). CF(0) has three main subunits: a(1), b(2) and c(9-12). The alpha and beta chains form an alternating ring which encloses part of the gamma chain. CF(1) is attached to CF(0) by a central stalk formed by the gamma and epsilon chains, while a peripheral stalk is formed by the delta and b chains.

Its subcellular location is the cell membrane. It carries out the reaction ATP + H2O + 4 H(+)(in) = ADP + phosphate + 5 H(+)(out). In terms of biological role, produces ATP from ADP in the presence of a proton gradient across the membrane. The catalytic sites are hosted primarily by the beta subunits. The chain is ATP synthase subunit beta from Clostridium botulinum (strain ATCC 19397 / Type A).